Here is a 116-residue protein sequence, read N- to C-terminus: Cation channel sperm-associated auxiliary subunit TMEM262 (116 aa).

Topologically, residues Met-1–Met-16 are cytoplasmic. A helical transmembrane segment spans residues Met-17 to His-38. Over Asn-39–Phe-51 the chain is Extracellular. The chain crosses the membrane as a helical span at residues His-52–Ser-72. Residues Leu-73–Cys-84 lie on the Cytoplasmic side of the membrane. Residues Phe-85 to Leu-107 traverse the membrane as a helical segment. Topologically, residues Ala-108–His-116 are extracellular.

As to quaternary structure, component of the CatSper complex or CatSpermasome composed of the core pore-forming members CATSPER1, CATSPER2, CATSPER3 and CATSPER4 as well as auxiliary members CATSPERB, CATSPERG, CATSPERD, CATSPERE, CATSPERZ, C2CD6/CATSPERT, TMEM249, TMEM262 and EFCAB9. HSPA1 may be an additional auxiliary complex member. The core complex members CATSPER1, CATSPER2, CATSPER3 and CATSPER4 form a heterotetrameric channel. The auxiliary CATSPERB, CATSPERG, CATSPERD and CATSPERE subunits form a pavilion-like structure over the pore which stabilizes the complex through interactions with CATSPER4, CATSPER3, CATSPER1 and CATSPER2 respectively. TMEM262/CATSPERH interacts with CATSPERB, further stabilizing the complex. C2CD6/CATSPERT interacts at least with CATSPERD and is required for targeting the CatSper complex in the flagellar membrane.

The protein localises to the cell projection. It is found in the cilium. The protein resides in the flagellum membrane. In terms of biological role, auxiliary component of the CatSper complex, a complex involved in sperm cell hyperactivation. The polypeptide is Cation channel sperm-associated auxiliary subunit TMEM262 (Homo sapiens (Human)).